The chain runs to 577 residues: Glycine--tRNA ligase (577 aa).

Positions 98 and 164 each coordinate substrate. Residues 196 to 198 (RNE), 206 to 211 (IRLREF), 328 to 329 (EC), and 451 to 454 (GIDR) contribute to the ATP site. 211-215 (FTQAE) contributes to the substrate binding site. 447–451 (EPSYG) is a substrate binding site.

Belongs to the class-II aminoacyl-tRNA synthetase family.

It localises to the cytoplasm. It carries out the reaction tRNA(Gly) + glycine + ATP = glycyl-tRNA(Gly) + AMP + diphosphate. Catalyzes the attachment of glycine to tRNA(Gly). The chain is Glycine--tRNA ligase from Methanocaldococcus jannaschii (strain ATCC 43067 / DSM 2661 / JAL-1 / JCM 10045 / NBRC 100440) (Methanococcus jannaschii).